The following is a 296-amino-acid chain: Probable transcription factor At1g44810 (296 aa).

A disordered region spans residues 1-119 (MNKKLLNPLE…AKKVSGDDDN (119 aa)). Positions 19–28 (EDVDEEISSG) are enriched in acidic residues. The span at 52–72 (TQTLNSPSTEAPTLDSGSETN) shows a compositional bias: polar residues. Basic and acidic residues predominate over residues 97 to 119 (RASEGTSSKDIKRAKKVSGDDDN).

The protein belongs to the GeBP family.

This Arabidopsis thaliana (Mouse-ear cress) protein is Probable transcription factor At1g44810.